The chain runs to 111 residues: uncharacterized protein (111 aa).

Helical transmembrane passes span Trp3–Ala23, Asp24–Ile44, Ala54–Leu74, and Ala80–Thr100.

This sequence belongs to the drug/metabolite transporter (DMT) superfamily. Small multidrug resistance (SMR) (TC 2.A.7.1) family.

It is found in the cell membrane. This is an uncharacterized protein from Bacillus subtilis (strain 168).